The following is a 194-amino-acid chain: CASP-like protein Ni6 (194 aa).

Residues 1–27 (MSSMETEKGAVPTPQAPPVAPTDNKYR) are Cytoplasmic-facing. The chain crosses the membrane as a helical span at residues 28-48 (VVDVILRVLLLAASIASVVLM). The Extracellular portion of the chain corresponds to 49 to 75 (VTSKQTEIIVSPFGSRPNAAKFQNSPA). Residues 76 to 96 (FIYLVAALSVAGLYSIITALV) form a helical membrane-spanning segment. The Cytoplasmic portion of the chain corresponds to 97–109 (SLSYMRKPIVPPK). The helical transmembrane segment at 110-130 (LFWILLIHDVLLLGIVAAATG) threads the bilayer. Residues 131–161 (TAGGVGYIGLKGNTHVRWGKIRNVYDKFCRH) are Extracellular-facing. Residues 162–182 (VGASIIVSLFAAAVLVLLVFV) form a helical membrane-spanning segment. The Cytoplasmic segment spans residues 183–194 (NANSLYRRIPKY).

It belongs to the Casparian strip membrane proteins (CASP) family. As to quaternary structure, homodimer and heterodimers.

It localises to the cell membrane. The chain is CASP-like protein Ni6 (Ni6) from Beta vulgaris subsp. maritima (Sea beet).